The primary structure comprises 251 residues: Imidazole glycerol phosphate synthase subunit HisF (251 aa).

Catalysis depends on residues aspartate 11 and aspartate 130.

Belongs to the HisA/HisF family. Heterodimer of HisH and HisF.

It is found in the cytoplasm. The enzyme catalyses 5-[(5-phospho-1-deoxy-D-ribulos-1-ylimino)methylamino]-1-(5-phospho-beta-D-ribosyl)imidazole-4-carboxamide + L-glutamine = D-erythro-1-(imidazol-4-yl)glycerol 3-phosphate + 5-amino-1-(5-phospho-beta-D-ribosyl)imidazole-4-carboxamide + L-glutamate + H(+). Its pathway is amino-acid biosynthesis; L-histidine biosynthesis; L-histidine from 5-phospho-alpha-D-ribose 1-diphosphate: step 5/9. In terms of biological role, IGPS catalyzes the conversion of PRFAR and glutamine to IGP, AICAR and glutamate. The HisF subunit catalyzes the cyclization activity that produces IGP and AICAR from PRFAR using the ammonia provided by the HisH subunit. The sequence is that of Imidazole glycerol phosphate synthase subunit HisF from Chloroherpeton thalassium (strain ATCC 35110 / GB-78).